The sequence spans 1025 residues: DNA ligase 4 (1025 aa).

The tract at residues methionine 1–valine 36 is disordered. ATP contacts are provided by glutamate 289, lysine 291, leucine 292, arginine 296, glutamate 349, phenylalanine 387, glutamate 447, lysine 452, lysine 469, and lysine 471. The N6-AMP-lysine intermediate role is filled by lysine 291. Glutamate 349 contributes to the Mg(2+) binding site. Glutamate 447 lines the Mg(2+) pocket. Residues valine 667–phenylalanine 763 enclose the BRCT 1 domain. The interval alanine 773–lysine 904 is disordered. Acidic residues-rich tracts occupy residues glutamate 775–glycine 785 and serine 806–alanine 816. Residues proline 817–serine 838 are compositionally biased toward basic and acidic residues. Over residues aspartate 845 to aspartate 870 the composition is skewed to acidic residues. Positions arginine 891–lysine 904 are enriched in basic and acidic residues. A BRCT 2 domain is found at aspartate 915–proline 1025.

The protein belongs to the ATP-dependent DNA ligase family. Mg(2+) serves as cofactor.

It is found in the nucleus. It carries out the reaction ATP + (deoxyribonucleotide)n-3'-hydroxyl + 5'-phospho-(deoxyribonucleotide)m = (deoxyribonucleotide)n+m + AMP + diphosphate.. Its function is as follows. DNA ligase involved in DNA non-homologous end joining (NHEJ); required for double-strand break (DSB) repair. In Coprinopsis cinerea (Inky cap fungus), this protein is DNA ligase 4 (LIG4).